Reading from the N-terminus, the 392-residue chain is Protein trapped in endoderm-1 (392 aa).

The Extracellular portion of the chain corresponds to Met1–Ala39. The helical transmembrane segment at Ile40–Leu60 threads the bilayer. Residues Leu61 to Ala73 lie on the Cytoplasmic side of the membrane. A helical membrane pass occupies residues Phe74–Ala94. Residues Val95–Lys110 are Extracellular-facing. A helical membrane pass occupies residues Ile111–Thr131. At Leu132–Gln156 the chain is on the cytoplasmic side. Residues Leu157–Gly177 traverse the membrane as a helical segment. The Extracellular portion of the chain corresponds to Glu178–Leu202. A helical membrane pass occupies residues Phe203–Ile223. The Cytoplasmic portion of the chain corresponds to Thr224–Arg268. The helical transmembrane segment at Leu269–Leu289 threads the bilayer. The Extracellular segment spans residues Ala290 to Pro302. N-linked (GlcNAc...) asparagine glycosylation is present at Asn298. The chain crosses the membrane as a helical span at residues Trp303–Tyr323. The Cytoplasmic segment spans residues Ala324–Val392. Phosphoserine occurs at positions 359, 362, and 366. Thr372 carries the post-translational modification Phosphothreonine.

Belongs to the G-protein coupled receptor 1 family. As to expression, in embryos, expression is seen at highest levels in the cuprophilic cells and at lower levels in the amnioserosa, developing CNS, cardiac mesoderm primordium and midline glia.

The protein localises to the cell membrane. In terms of biological role, essential for the first active step of germ cell migration: transepithelial migration of germ cells through the posterior midgut (PMG) epithelium. This Drosophila melanogaster (Fruit fly) protein is Protein trapped in endoderm-1 (Tre1).